The following is a 68-amino-acid chain: Metallothionein (68 aa).

20 residues coordinate a divalent metal cation: Cys7, Cys9, Cys14, Cys16, Cys20, Cys22, Cys25, Cys27, Cys35, Cys39, Cys40, Cys42, Cys43, Cys47, Cys50, Cys54, Cys56, Cys64, Cys66, and Cys67.

It belongs to the metallothionein superfamily. Type 1 family.

Its function is as follows. Metallothioneins have a high content of cysteine residues that bind various heavy metals. This Scyliorhinus torazame (Cloudy catshark) protein is Metallothionein (mt).